A 51-amino-acid chain; its full sequence is Magnetosome protein Mms5 (51 aa).

Topologically, residues 1–12 are lumenal; it reads MLSAKGVSLGLG. The interval 9-16 is LG region; sequence LGLGLGLG. Residues 13–33 form a helical membrane-spanning segment; sequence LGLGAWGPVLLGVVGVAGAIA. Over 34 to 51 the chain is Cytoplasmic; that stretch reads LYGYYKNRNAEPAAAEAV.

Belongs to the magnetosome MamD/Mms5 family. Seen in gels as a band of about 5 kDa, with an N-terminus that corresponds to residue 8, suggesting it may undergo N-terminal cleavage.

The protein resides in the magnetosome membrane. Its function is as follows. Might be involved in magnetite crystal growth. The polypeptide is Magnetosome protein Mms5 (Paramagnetospirillum magneticum (strain ATCC 700264 / AMB-1) (Magnetospirillum magneticum)).